The chain runs to 155 residues: Ribosomal RNA large subunit methyltransferase H (155 aa).

S-adenosyl-L-methionine is bound by residues L72, G103, and 122–127 (LSALTL).

This sequence belongs to the RNA methyltransferase RlmH family. In terms of assembly, homodimer.

It is found in the cytoplasm. The catalysed reaction is pseudouridine(1915) in 23S rRNA + S-adenosyl-L-methionine = N(3)-methylpseudouridine(1915) in 23S rRNA + S-adenosyl-L-homocysteine + H(+). Its function is as follows. Specifically methylates the pseudouridine at position 1915 (m3Psi1915) in 23S rRNA. The polypeptide is Ribosomal RNA large subunit methyltransferase H (Shigella boydii serotype 18 (strain CDC 3083-94 / BS512)).